The following is a 463-amino-acid chain: Myocyte-specific enhancer factor 2C (463 aa).

Residues 3–57 (RKKIQITRIMDERNRQVTFTKRKFGLMKKAYELSVLCDCEIALIIFNSTNKLFQY) form the MADS-box domain. Lysine 4 carries the post-translational modification N6-acetyllysine. A DNA-binding region (mef2-type) is located at residues 58–86 (ASTDMDKVLLKYTEYNEPHESRTNSDIVE). The residue at position 59 (serine 59) is a Phosphoserine; by CK2. Serine 98 and serine 104 each carry phosphoserine. Lysine 114 and lysine 117 each carry N6-acetyllysine. The interval 178 to 223 (NSMSPGVTHRPPSAGNTGGLMGGDLTSGAGTSAGNGYGNPRNSPGL) is disordered. A phosphoserine mark is found at serine 220 and serine 226. Residues lysine 232 and lysine 237 each carry the N6-acetyllysine modification. Serine 238 bears the Phosphoserine mark. N6-acetyllysine is present on residues lysine 250 and lysine 262. A phosphothreonine; by MAPK7 and MAPK14 mark is found at threonine 283 and threonine 290. The tract at residues 358–389 (ACTSTHLSQSSNLSLPSTQSLNIKSEPVSPPR) is transcription repressor. A compositionally biased stretch (polar residues) spans 365–380 (SQSSNLSLPSTQSLNI). Residues 365–463 (SQSSNLSLPS…RMRLSEGWAT (99 aa)) are disordered. Residue lysine 381 forms a Glycyl lysine isopeptide (Lys-Gly) (interchain with G-Cter in SUMO) linkage. At serine 386 the chain carries Phosphoserine; by CDK5. Serine 409 carries the phosphoserine; by MAPK7 modification. The span at 409 to 422 (SPVDSLSSCSSSYD) shows a compositional bias: low complexity. Over residues 423-433 (GSDREDHRNEF) the composition is skewed to basic and acidic residues. Serine 435 carries the phosphoserine modification.

In terms of assembly, forms a complex with class II HDACs in undifferentiating cells. On myogenic differentiation, HDACs are released into the cytoplasm allowing MEF2s to interact with other proteins for activation. Interacts with EP300 in differentiating cells; the interaction acetylates MEF2C leading to increased DNA binding and activation. Interacts with HDAC7 and CARM1. Interacts with HDAC4, HDAC7 and HDAC9; the interaction with HDACs represses transcriptional activity. Interacts with LPIN1. Interacts with MYOCD. Interacts with AKAP13. Interacts with FOXK1; the interaction inhibits MEF2C transactivation activity. Interacts (via N-terminus) with HABP4; this interaction decreases DNA-binding activity of MEF2C in myocardial cells in response to mechanical stress. Interacts with JPH2; interaction specifically takes place with the Junctophilin-2 N-terminal fragment cleavage product of JPH2. Interacts (via MADS box) with SOX18. Interacts with PHF7; the interaction promotes MEF2C binding to its transcription targets. Phosphorylated on Ser-59; which enhances DNA binding activity. Phosphorylated on Ser-386; which is required for Lys-381 sumoylation and inhibits transcriptional activity. Post-translationally, acetylated by p300 on several sites in diffentiating myocytes. Acetylation on Lys-4 increases DNA binding and transactivation. In terms of processing, sumoylated on Lys-381 with SUMO2 but not SUMO1; which represses transcriptional activity. Proteolytically cleaved in cerebellar granule neurons on several sites by caspase 3 and caspase 7 following neurotoxicity. Preferentially cleaves the CDK5-mediated hyperphosphorylated form which leads to neuron apoptosis and transcriptional inactivation.

Its subcellular location is the nucleus. The protein localises to the cytoplasm. It is found in the sarcoplasm. Functionally, transcription activator which binds specifically to the MEF2 element present in the regulatory regions of many muscle-specific genes. Controls cardiac morphogenesis and myogenesis, and is also involved in vascular development. Enhances transcriptional activation mediated by SOX18. Plays an essential role in hippocampal-dependent learning and memory by suppressing the number of excitatory synapses and thus regulating basal and evoked synaptic transmission. Crucial for normal neuronal development, distribution, and electrical activity in the neocortex. Necessary for proper development of megakaryocytes and platelets and for bone marrow B-lymphopoiesis. Required for B-cell survival and proliferation in response to BCR stimulation, efficient IgG1 antibody responses to T-cell-dependent antigens and for normal induction of germinal center B-cells. May also be involved in neurogenesis and in the development of cortical architecture. This Sus scrofa (Pig) protein is Myocyte-specific enhancer factor 2C.